Here is a 172-residue protein sequence, read N- to C-terminus: Single-stranded DNA-binding protein 2 (172 aa).

Residues 6–111 (VNKVILVGHI…VIVNVGGTMQ (106 aa)) enclose the SSB domain. Residues 55-61 (WHRVVVF) mediate DNA binding. The disordered stretch occupies residues 113 to 172 (LGRHNSQPQQEPQTPPTAAKGEGKAVKGAGNAAKGKNAAAPQQPPAQPDPAYDFDDDIPF). The segment covering 119 to 153 (QPQQEPQTPPTAAKGEGKAVKGAGNAAKGKNAAAP) has biased composition (low complexity). Residues 167–172 (DDDIPF) carry the Important for interaction with partner proteins motif.

In terms of assembly, homotetramer.

Its function is as follows. Plays an important role in DNA replication, recombination and repair. Binds to ssDNA and to an array of partner proteins to recruit them to their sites of action during DNA metabolism. This is Single-stranded DNA-binding protein 2 (ssb2) from Salmonella typhimurium (strain LT2 / SGSC1412 / ATCC 700720).